The following is a 105-amino-acid chain: UPF0235 protein RF_1332 (105 aa).

The protein belongs to the UPF0235 family.

This is UPF0235 protein RF_1332 from Rickettsia felis (strain ATCC VR-1525 / URRWXCal2) (Rickettsia azadi).